A 212-amino-acid polypeptide reads, in one-letter code: Protein FAM177A1 (212 aa).

An N-acetylmethionine modification is found at methionine 1. Basic and acidic residues predominate over residues 1 to 11 (MEGEPASREEG). The segment at 1–33 (MEGEPASREEGEAVNASGAAAASAFRESAQQMS) is disordered. Residues 13–29 (AVNASGAAAASAFRESA) show a composition bias toward low complexity. Serine 69 is modified (phosphoserine). Threonine 70 carries the phosphothreonine modification. A coiled-coil region spans residues 135-172 (IDEYYRMKKEEEEEEEENRMSEEAERQYQQNKLQADSV). Residues 146–179 (EEEEEENRMSEEAERQYQQNKLQADSVVQSDQPE) form a disordered region. The segment covering 161 to 179 (QYQQNKLQADSVVQSDQPE) has biased composition (polar residues).

The protein belongs to the FAM177 family.

In Bos taurus (Bovine), this protein is Protein FAM177A1 (FAM177A1).